Reading from the N-terminus, the 1365-residue chain is DNA-directed RNA polymerase subunit beta' (1365 aa).

Cysteine 249, cysteine 316, cysteine 323, and cysteine 326 together coordinate Zn(2+).

Belongs to the RNA polymerase beta' chain family. RpoC2 subfamily. In terms of assembly, in cyanobacteria the RNAP catalytic core is composed of 2 alpha, 1 beta, 1 beta', 1 gamma and 1 omega subunit. When a sigma factor is associated with the core the holoenzyme is formed, which can initiate transcription. Requires Zn(2+) as cofactor.

The catalysed reaction is RNA(n) + a ribonucleoside 5'-triphosphate = RNA(n+1) + diphosphate. In terms of biological role, DNA-dependent RNA polymerase catalyzes the transcription of DNA into RNA using the four ribonucleoside triphosphates as substrates. The sequence is that of DNA-directed RNA polymerase subunit beta' from Synechococcus sp. (strain CC9311).